Reading from the N-terminus, the 132-residue chain is Small ribosomal subunit protein uS8 (132 aa).

It belongs to the universal ribosomal protein uS8 family. In terms of assembly, part of the 30S ribosomal subunit. Contacts proteins S5 and S12.

In terms of biological role, one of the primary rRNA binding proteins, it binds directly to 16S rRNA central domain where it helps coordinate assembly of the platform of the 30S subunit. This is Small ribosomal subunit protein uS8 from Rhodopseudomonas palustris (strain BisB18).